A 193-amino-acid chain; its full sequence is Xanthine phosphoribosyltransferase (193 aa).

Xanthine-binding residues include leucine 20 and threonine 27. A 5-phospho-alpha-D-ribose 1-diphosphate-binding site is contributed by 128-132 (ANGQA). Residue lysine 156 participates in xanthine binding.

The protein belongs to the purine/pyrimidine phosphoribosyltransferase family. Xpt subfamily. In terms of assembly, homodimer.

It localises to the cytoplasm. It carries out the reaction XMP + diphosphate = xanthine + 5-phospho-alpha-D-ribose 1-diphosphate. It functions in the pathway purine metabolism; XMP biosynthesis via salvage pathway; XMP from xanthine: step 1/1. Converts the preformed base xanthine, a product of nucleic acid breakdown, to xanthosine 5'-monophosphate (XMP), so it can be reused for RNA or DNA synthesis. This is Xanthine phosphoribosyltransferase from Streptococcus uberis (strain ATCC BAA-854 / 0140J).